We begin with the raw amino-acid sequence, 176 residues long: Cell division control protein 31 (176 aa).

Residues 1–12 (MFANARAKRRSR) are compositionally biased toward basic residues. The interval 1–21 (MFANARAKRRSRASSPTPARL) is disordered. 4 EF-hand domains span residues 34-69 (EQRQ…LGFN), 70-105 (AEKS…KIVE), 107-142 (DPLE…LNEN), and 143-176 (IDDQ…MDEA). Residues Asp47, Asp49, Asp51, and Glu58 each coordinate Ca(2+). Residues Asp156, Asp158, Asp160, Glu162, and Glu167 each contribute to the Ca(2+) site.

The protein belongs to the centrin family. In terms of assembly, component of the spindle pole body (SPB), acting as the connector of microtubule arrays in the cytoplasm and the nucleoplasm, is involved in nuclear positioning before chromosome segregation, SPB separation, spindle formation, chromosome segregation, nuclear migration into the bud, nuclear reorientation after cytokinesis and nuclear fusion during conjugation. The SPB half-bridge, which is tightly associated with the cytoplasmic side of the nuclear envelope and the SPB, is playing a key role as the starting structure for and in the initiation of SPB duplication in G1. Within the complex, interacts with sad1.

The protein localises to the nucleus. Required for the proper coordination between exit from mitosis and the initiation of septation. Has a role in bipolar spindle formation during spindle pole body (SPB) duplication. Required for the localization of sad1 to the SPB. The polypeptide is Cell division control protein 31 (cdc31) (Schizosaccharomyces pombe (strain 972 / ATCC 24843) (Fission yeast)).